The primary structure comprises 152 residues: Deoxyuridine 5'-triphosphate nucleotidohydrolase (152 aa).

Residues 71–73 (RSG), N84, 88–90 (LID), and M98 each bind substrate.

The protein belongs to the dUTPase family. Requires Mg(2+) as cofactor.

The enzyme catalyses dUTP + H2O = dUMP + diphosphate + H(+). It functions in the pathway pyrimidine metabolism; dUMP biosynthesis; dUMP from dCTP (dUTP route): step 2/2. This enzyme is involved in nucleotide metabolism: it produces dUMP, the immediate precursor of thymidine nucleotides and it decreases the intracellular concentration of dUTP so that uracil cannot be incorporated into DNA. This is Deoxyuridine 5'-triphosphate nucleotidohydrolase from Aeromonas salmonicida (strain A449).